A 1024-amino-acid chain; its full sequence is Multidrug resistance protein MdtC (1024 aa).

12 helical membrane passes run 12-32 (VATTLLTLAITLSGIIGFSLL), 333-353 (EVERSLVIAVALVILVVFIFL), 360-380 (LIPAVAVPVSLIGTFAAMYLC), 387-407 (LSLMALTIATGFVVDDAIVVL), 435-455 (VLSMSISLVAVFIPLLLMAGL), 469-489 (VAIGISLVISLTLTPMMCAWL), 528-548 (WVMVVLLSTIALNVWLYISIP), 853-873 (LWLIMAAIATVYIVLGILYES), 875-895 (VHPLTILSTLPSAGVGALLAL), 897-917 (LFDAPFSLIALIGIMLLIGIV), 953-973 (PIIMTTLAALFGALPLVLSSG), and 984-1004 (ITIVGGLVVSQLLTLYTTPVI).

Belongs to the resistance-nodulation-cell division (RND) (TC 2.A.6) family. MdtC subfamily. As to quaternary structure, part of a tripartite efflux system composed of MdtA, MdtB and MdtC. MdtC forms a heteromultimer with MdtB.

It localises to the cell inner membrane. The protein is Multidrug resistance protein MdtC of Yersinia pestis bv. Antiqua (strain Antiqua).